A 271-amino-acid chain; its full sequence is Sulfur carrier protein adenylyltransferase (271 aa).

Residues Arg13, Gly40, Glu61, Arg72, Lys85, Leu109, and 129-133 (DNFPT) each bind ATP. Cys175 and Cys178 together coordinate Zn(2+). A Glycyl cysteine thioester (Cys-Gly) (interchain with G-Cter in TtuB) cross-link involves residue Cys192. Residues Cys249 and Cys252 each coordinate Zn(2+).

It belongs to the HesA/MoeB/ThiF family. Zn(2+) serves as cofactor. In terms of processing, conjugated to TtuB via a covalent linkage that likely involves a lysine residue. Is able to form a covalent thioester adduct with TtuB via Cys-192 in vitro.

It catalyses the reaction [molybdopterin-synthase sulfur-carrier protein]-C-terminal Gly-Gly + ATP + H(+) = [molybdopterin-synthase sulfur-carrier protein]-C-terminal Gly-Gly-AMP + diphosphate. The catalysed reaction is [ThiS sulfur-carrier protein]-C-terminal Gly-Gly + ATP + H(+) = [ThiS sulfur-carrier protein]-C-terminal Gly-Gly-AMP + diphosphate. The enzyme catalyses [TtuB sulfur-carrier protein]-C-terminal Gly-Gly + ATP + H(+) = [TtuB sulfur-carrier protein]-C-terminal Gly-Gly-AMP + diphosphate. It functions in the pathway tRNA modification. Its pathway is cofactor biosynthesis; thiamine diphosphate biosynthesis. It participates in cofactor biosynthesis; molybdopterin biosynthesis. Enzymatic activity may be regulated by TtuB conjugation. Its function is as follows. Adenylyltransferase involved in the biosynthesis of several sulfur compounds. Is required for the 2-thiolation of 5-methyluridine residue at position 54 in the T loop of tRNAs, leading to 5-methyl-2-thiouridine (m(5)s(2)U or s(2)T). This modification allows thermal stabilization of tRNAs in thermophilic microorganisms, and is essential for cell growth at high temperatures. TtuC catalyzes the adenylation by ATP of the carboxyl group of the C-terminal glycine of sulfur carrier protein TtuB. Is also involved in the biosynthesis of thiamine, molybdenum cofactor (Moco) and probably tungsten cofactor (Wco), by adenylating the sulfur carriers ThiS and MoaD. Is required for the conjugation of TtuB to target proteins. The chain is Sulfur carrier protein adenylyltransferase from Thermus thermophilus (strain ATCC BAA-163 / DSM 7039 / HB27).